We begin with the raw amino-acid sequence, 545 residues long: MAKRIIYNEQARRALERGIDILAESVAVTLGPKGRNVVLEKKFGAPQIINDGVTIAKEIELEDHIENTGVALIRQAASKTNDAAGDGTTTATVLAHAMVKAGLRNVAAGANAITLKKGIDKATEFLVGKIQENSKPISDSNAIAQCGTIAAGNDEEVGQMIANAMDKVGKEGVISLEEGKSMTTELEVTEGMRFDKGYISPYFATDTERMEAVLDEPYILLTDKKIALVQDLVPVLEQIAKTGKPLVIIAEDIEKEALATLVVNRLRGVLNVAAVKAPGFGDRRKAMLEDMAVLTNGQLITEDAGLKLENATLDMLGTGRRITINKETTTIVAEGNEQAVKARCDQIKKQMDETDSSYDKEKLQERLAKLAGGVAVIKVGAATETEMKDKKLRLEDAINATKAAVEEGIVPGGGTTLAHLSPILKEWADKNLEGEELIGANIVEASLTAPLMRIAENAGSNGAVIAENVKTKPFNDGFNAATGEYVDMSSAGIVDPAKVTRSGLQNAASIAGMVLTTECIVADLPEKKDSAAPAGAPGMGGDFDY.

Residues 29 to 32, 86 to 90, G413, 479 to 481, and D495 contribute to the ATP site; these read TLGP, DGTTT, and NAA.

Belongs to the chaperonin (HSP60) family. In terms of assembly, forms a cylinder of 14 subunits composed of two heptameric rings stacked back-to-back. Interacts with the co-chaperonin GroES.

It localises to the cytoplasm. It carries out the reaction ATP + H2O + a folded polypeptide = ADP + phosphate + an unfolded polypeptide.. In terms of biological role, together with its co-chaperonin GroES, plays an essential role in assisting protein folding. The GroEL-GroES system forms a nano-cage that allows encapsulation of the non-native substrate proteins and provides a physical environment optimized to promote and accelerate protein folding. This Prochlorococcus marinus (strain AS9601) protein is Chaperonin GroEL 2.